The primary structure comprises 428 residues: Cyclic AMP-responsive element-binding protein 3-like protein 3-B (428 aa).

Over 1–286 (MDHYSDQGGD…VMNGSNKPVQ (286 aa)) the chain is Cytoplasmic. A compositionally biased stretch (low complexity) spans 67–83 (VSGSPVWSPSPSDSGIS). The interval 67-104 (VSGSPVWSPSPSDSGISEDPHSDHIDSPPPNASPPMEP) is disordered. Pro residues predominate over residues 93 to 103 (SPPPNASPPME). A bZIP domain is found at 210–273 (ILKKIRRKIR…ISLMEQLRRL (64 aa)). Residues 212–241 (KKIRRKIRNKQSAQESRKKKKEYIDGLESR) are basic motif. The leucine-zipper stretch occupies residues 252-273 (LQRKVFQLEKCNISLMEQLRRL). A helical; Signal-anchor for type II membrane protein membrane pass occupies residues 287–303 (AGTCVLVLLLSFTLILL). At 304-428 (PNLKPFTDTK…SRRSPHADDM (125 aa)) the chain is on the lumenal side. Residues 381–428 (TEYDPESHNHSFDQHDEHHHGDPITGHVATVTLNPRRGSRRSPHADDM) are disordered. The span at 385-402 (PESHNHSFDQHDEHHHGD) shows a compositional bias: basic and acidic residues. Asparagine 389 is a glycosylation site (N-linked (GlcNAc...) asparagine).

Belongs to the bZIP family. ATF subfamily. In terms of assembly, binds DNA as a dimer. Post-translationally, controlled by regulated intramembrane proteolysis (RIP). A fragment containing the cytoplasmic transcription factor domain is released by proteolysis. The cleavage seems to be performed sequentially by site-1 and site-2 proteases.

It localises to the endoplasmic reticulum membrane. Its subcellular location is the nucleus. Functionally, transcriptional activator. Binds the cAMP response element (CRE). Activates transcription through box-B element and CRE. Seems to function synergistically with atf6. Regulates FGF21 transcription. The sequence is that of Cyclic AMP-responsive element-binding protein 3-like protein 3-B (creb3l3b) from Danio rerio (Zebrafish).